The chain runs to 393 residues: Probable N-acetyl-LL-diaminopimelate aminotransferase (393 aa).

Lysine 231 is subject to N6-(pyridoxal phosphate)lysine.

It belongs to the class-I pyridoxal-phosphate-dependent aminotransferase family. Homodimer. It depends on pyridoxal 5'-phosphate as a cofactor.

The protein localises to the cytoplasm. It carries out the reaction N-acetyl-(2S,6S)-2,6-diaminopimelate + 2-oxoglutarate = L-2-acetamido-6-oxoheptanedioate + L-glutamate. It participates in amino-acid biosynthesis; L-lysine biosynthesis via DAP pathway; LL-2,6-diaminopimelate from (S)-tetrahydrodipicolinate (acetylase route): step 2/3. Functionally, essential for murein biosynthesis. Probably catalyzes the conversion of L-2-acetamido-6-oxopimelate to N-acetyl-LL-2,6-diaminopimelate. This is Probable N-acetyl-LL-diaminopimelate aminotransferase from Bacillus subtilis (strain 168).